The following is a 436-amino-acid chain: WD repeat domain phosphoinositide-interacting protein 2 (436 aa).

The stretch at 182–222 is one WD 1 repeat; it reads AHDSPLAALAFDASGTKLATASEKGTVIRVFSIPEGQKLFE. The L/FRRG motif signature appears at 223-226; it reads FRRG. WD repeat units follow at residues 228 to 267 and 311 to 349; these read KRCV…EKPQ and GHKN…GGEC.

Belongs to the WD repeat PROPPIN family.

It localises to the preautophagosomal structure membrane. Its function is as follows. Component of the autophagy machinery that controls the major intracellular degradation process by which cytoplasmic materials are packaged into autophagosomes and delivered to lysosomes for degradation. Involved in an early step of the formation of preautophagosomal structures. The sequence is that of WD repeat domain phosphoinositide-interacting protein 2 (WIPI2) from Gallus gallus (Chicken).